The following is a 293-amino-acid chain: Lymphocyte antigen 6 complex locus protein G6f (293 aa).

The signal sequence occupies residues 1–19; that stretch reads MAMVVFLLLYLCGHPQAAA. The 105-residue stretch at 20 to 124 folds into the Ig-like V-type domain; sequence DNIQTLYVPS…HKYQNWRVYD (105 aa). At 20-237 the chain is on the extracellular side; that stretch reads DNIQTLYVPS…APLPSWDVSW (218 aa). Cys37 and Cys108 are joined by a disulfide. Asn90 carries an N-linked (GlcNAc...) asparagine glycan. A helical membrane pass occupies residues 238 to 258; it reads ILMLLFAAGQGVTIIALSIVI. At 259-293 the chain is on the cytoplasmic side; the sequence is WRHQRAQGTQDREPSIPHFKPEVQVYENIHLARLR. Position 284 is a phosphotyrosine (Tyr284).

In terms of assembly, homodimer; disulfide-linked. Interacts with GRB2 and GRB7 in a phosphorylation-dependent manner. Post-translationally, N-glycosylated.

It localises to the cell membrane. Functionally, may play a role in the downstream signal transduction pathways involving GRB2 and GRB7. In Rattus norvegicus (Rat), this protein is Lymphocyte antigen 6 complex locus protein G6f (Ly6g6f).